We begin with the raw amino-acid sequence, 344 residues long: Sorting nexin-16 (344 aa).

Positions 1 to 10 (MATPYVPVPM) are enriched in pro residues. 2 disordered regions span residues 1-49 (MATP…DSSV) and 83-105 (SIEY…NWED). The span at 14–26 (NSASSFTNNRNQR) shows a compositional bias: polar residues. Low complexity predominate over residues 27 to 40 (SSSFGSVSTSSNSS). Residues 88-105 (ARPRDTEEQHPDALNWED) are compositionally biased toward basic and acidic residues. The 114-residue stretch at 105 to 218 (DRPSTPTILG…EFLCLDDPPG (114 aa)) folds into the PX domain. Residues arginine 144, threonine 146, and arginine 184 each coordinate a 1,2-diacyl-sn-glycero-3-phospho-(1D-myo-inositol-3-phosphate). Position 222 is a phosphoserine (serine 222). Residues 223 to 278 (LEESRAFCETLEETNYHLQRELLEKQKEVESLKKLLGEKQLHIDALETRIRTLSLE) adopt a coiled-coil conformation.

This sequence belongs to the sorting nexin family. As to quaternary structure, homooligomer. Interacts with EGFR.

Its subcellular location is the early endosome membrane. It localises to the late endosome membrane. The protein localises to the cytoplasm. The protein resides in the lysosome. In terms of biological role, may be involved in several stages of intracellular trafficking. Plays a role in protein transport from early to late endosomes. Plays a role in protein transport to the lysosome. Promotes degradation of EGFR after EGF signaling. The protein is Sorting nexin-16 (Snx16) of Rattus norvegicus (Rat).